The primary structure comprises 187 residues: Elongation factor P (187 aa).

Belongs to the elongation factor P family.

The protein resides in the cytoplasm. Its pathway is protein biosynthesis; polypeptide chain elongation. Functionally, involved in peptide bond synthesis. Stimulates efficient translation and peptide-bond synthesis on native or reconstituted 70S ribosomes in vitro. Probably functions indirectly by altering the affinity of the ribosome for aminoacyl-tRNA, thus increasing their reactivity as acceptors for peptidyl transferase. This Mycolicibacterium vanbaalenii (strain DSM 7251 / JCM 13017 / BCRC 16820 / KCTC 9966 / NRRL B-24157 / PYR-1) (Mycobacterium vanbaalenii) protein is Elongation factor P.